The following is a 97-amino-acid chain: MKIRPLHDRIVVRRKEEETATAGGIILPGAAAEKPNQGVVISVGTGRILDNGSVQALAVNEGDVVVFGKYSGQNTIDIDGEELLILNESDIYGVLEA.

Belongs to the GroES chaperonin family. As to quaternary structure, heptamer of 7 subunits arranged in a ring. Interacts with the chaperonin GroEL.

It is found in the cytoplasm. Its function is as follows. Together with the chaperonin GroEL, plays an essential role in assisting protein folding. The GroEL-GroES system forms a nano-cage that allows encapsulation of the non-native substrate proteins and provides a physical environment optimized to promote and accelerate protein folding. GroES binds to the apical surface of the GroEL ring, thereby capping the opening of the GroEL channel. This Oleispira antarctica protein is Co-chaperonin GroES.